The following is a 726-amino-acid chain: Catalase-peroxidase (726 aa).

A disordered region spans residues M1 to S33. A cross-link (tryptophyl-tyrosyl-methioninium (Trp-Tyr) (with M-252)) is located at residues W105–Y226. H106 serves as the catalytic Proton acceptor. The segment at residues Y226–M252 is a cross-link (tryptophyl-tyrosyl-methioninium (Tyr-Met) (with W-105)). H267 contributes to the heme b binding site.

Belongs to the peroxidase family. Peroxidase/catalase subfamily. Homodimer or homotetramer. Requires heme b as cofactor. Formation of the three residue Trp-Tyr-Met cross-link is important for the catalase, but not the peroxidase activity of the enzyme.

It carries out the reaction H2O2 + AH2 = A + 2 H2O. The enzyme catalyses 2 H2O2 = O2 + 2 H2O. Functionally, bifunctional enzyme with both catalase and broad-spectrum peroxidase activity. This Salmonella schwarzengrund (strain CVM19633) protein is Catalase-peroxidase.